Reading from the N-terminus, the 232-residue chain is Ribonuclease 3 (232 aa).

The region spanning 6–135 is the RNase III domain; that stretch reads QDYLAKTYGI…FIGALYLDQG (130 aa). Mg(2+) is bound at residue Glu48. The active site involves Asp52. Asp121 and Glu124 together coordinate Mg(2+). Glu124 is an active-site residue. One can recognise a DRBM domain in the interval 161-230; the sequence is DAKTSLQEFL…AKHALEKLRM (70 aa).

It belongs to the ribonuclease III family. As to quaternary structure, homodimer. Mg(2+) is required as a cofactor.

It is found in the cytoplasm. It catalyses the reaction Endonucleolytic cleavage to 5'-phosphomonoester.. Digests double-stranded RNA. Involved in the processing of primary rRNA transcript to yield the immediate precursors to the large and small rRNAs (23S and 16S). Processes some mRNAs, and tRNAs when they are encoded in the rRNA operon. Processes pre-crRNA and tracrRNA of type II CRISPR loci if present in the organism. The chain is Ribonuclease 3 from Limosilactobacillus fermentum (strain NBRC 3956 / LMG 18251) (Lactobacillus fermentum).